An 88-amino-acid polypeptide reads, in one-letter code: Acyl-CoA-binding protein homolog (88 aa).

The ACB domain maps to 3 to 88; that stretch reads PQADFDKAAG…AHELIEKYGL (86 aa). An acyl-CoA-binding positions include lysine 15, 30–34, lysine 52, lysine 56, and tyrosine 75; that span reads YGLYK.

Belongs to the ACBP family. In terms of tissue distribution, brain. Is selectively expressed in glial cells.

The protein localises to the endoplasmic reticulum. The protein resides in the golgi apparatus. Functionally, may play important functions in the control of brain and pituitary activities. May regulate GABA neurotransmission through a paracrine and/or autocrine mechanism. May not bind acyl-CoA esters. The chain is Acyl-CoA-binding protein homolog from Pelophylax ridibundus (Marsh frog).